The sequence spans 316 residues: Aquaglyceroporin-2 (316 aa).

The tract at residues 1–31 (MADERGPINKSGPSSTYGATENNGESGGTRG) is disordered. The Cytoplasmic segment spans residues 1–59 (MADERGPINKSGPSSTYGATENNGESGGTRGAPATEDVIVIQDSGWYYIKFRFKEPFAE). A compositionally biased stretch (polar residues) spans 11–24 (SGPSSTYGATENNG). Residues 60–80 (FLGTFILVAFGVGAIAQTVLS) traverse the membrane as a helical segment. Topologically, residues 81–86 (KGATGN) are extracellular. A helical membrane pass occupies residues 87–107 (WITIALGFGLGLALGIAVSGH). Topologically, residues 108–131 (YSGGHLNPAVTITLAIYRKFPWVK) are cytoplasmic. Residues 114 to 116 (NPA) carry the NPA 1 motif. Residues 132–152 (VPVYITAQVLGAFVAAAVIYL) form a helical membrane-spanning segment. At 153–187 (NYLPAIYNFAGDKRDVIGANATAGIFATYPQPFMS) the chain is on the extracellular side. Asparagine 172 carries an N-linked (GlcNAc...) asparagine glycan. The chain crosses the membrane as a helical span at residues 188-208 (IGGAFFSEALGTFFLLFVILA). Topologically, residues 209-219 (MTDERNVPTTR) are cytoplasmic. The helical transmembrane segment at 220–240 (IVAPITIGLTLTAIAISLGFE) threads the bilayer. Residues 241-271 (TGFSLNAARDFGPRLFTFFIGYGVEVFTAYK) lie on the Extracellular side of the membrane. The NPA 2 signature appears at 246–248 (NAA). The chain crosses the membrane as a helical span at residues 272–292 (FYFWIPLVAPIVGGLVAGFVY). The Cytoplasmic segment spans residues 293-316 (DSLLYWGEKSFLNKNVHHEHRAVA).

The protein belongs to the MIP/aquaporin (TC 1.A.8) family.

The protein resides in the cell membrane. Its subcellular location is the membrane. It catalyses the reaction H2O(in) = H2O(out). The enzyme catalyses glycerol(in) = glycerol(out). Its activity is regulated as follows. Polyethylene glycol (PEG) stimulates whereas glycerol inhibits the aquaporin activity. Its function is as follows. Water channel required to facilitate the transport of water across membranes. Stimulates plant drought tolerance by facilitating the transport of water from the arbuscular mycorrhiza fungus to host plants. This is Aquaglyceroporin-2 from Rhizophagus irregularis (Arbuscular mycorrhizal fungus).